Reading from the N-terminus, the 127-residue chain is Fatty acid-binding protein, liver (127 aa).

Position 1 is an N-acetylmethionine (Met-1). An N6-succinyllysine mark is found at Lys-31 and Lys-36. Ser-39 carries the post-translational modification Phosphoserine. Position 46 is an N6-succinyllysine (Lys-46). At Ser-56 the chain carries Phosphoserine. N6-succinyllysine is present on residues Lys-57, Lys-78, and Lys-90. Ser-100 is modified (phosphoserine). Asn-105 bears the Deamidated asparagine; alternate mark. The segment at residues 105 to 106 (NG) is a cross-link (isoaspartyl glycine isopeptide (Asn-Gly); alternate). Lys-121 carries the post-translational modification N6-succinyllysine.

This sequence belongs to the calycin superfamily. Fatty-acid binding protein (FABP) family. As to quaternary structure, monomer. In terms of processing, deamidation and transpeptidation at the beta carboxyl of Asn-105 forms an isoaspartyl residue and Edman degradation appears as though blocked. This rearrangement gives rise to an extra negative charge carried by the acid form.

The protein resides in the cytoplasm. Its function is as follows. Plays a role in lipoprotein-mediated cholesterol uptake in hepatocytes. Binds cholesterol. Binds free fatty acids and their coenzyme A derivatives, bilirubin, and some other small molecules in the cytoplasm. May be involved in intracellular lipid transport. The sequence is that of Fatty acid-binding protein, liver (FABP1) from Bos taurus (Bovine).